A 701-amino-acid chain; its full sequence is Eukaryotic peptide chain release factor GTP-binding subunit (701 aa).

Residues 1–25 (MSDDQQYNQDKLSQDFQNTSIGSGE) are compositionally biased toward polar residues. 3 disordered regions span residues 1-63 (MSDD…YQGG), 91-124 (NQGY…NQQD), and 164-259 (KLAN…VIQE). The several sort of repeats stretch occupies residues 20-131 (SIGSGEQQQQ…QQDQQPVQNQ (112 aa)). Residues 26–40 (QQQQSYQQYQQQPQQ) show a composition bias toward low complexity. Residues 41 to 54 (NNFNANSAPTFTPS) show a composition bias toward polar residues. The charged stretch occupies residues 132–271 (GMSLADFQKQ…DEVDEEVVKD (140 aa)). A compositionally biased stretch (basic and acidic residues) spans 170-224 (KAPETESKEATPAATEKEATPAATEKEATPAATEKEATPAATEKETTPAPAKKEA). Over residues 228–252 (SVKSESKPASKSTSKVATKESTPVT) the composition is skewed to polar residues. Positions 276-501 (KDHVSIIFMG…FLDNMKTMQR (226 aa)) constitute a tr-type G domain. Residues 285–292 (GHVDAGKS) are G1. 285-292 (GHVDAGKS) lines the GTP pocket. The interval 341–345 (GKTIE) is G2. The residue at position 359 (threonine 359) is a Phosphothreonine. The segment at 362-365 (DAPG) is G3. GTP-binding positions include 362-366 (DAPGH) and 424-427 (NKMD). Positions 424–427 (NKMD) are G4. The segment at 465–467 (SGY) is G5.

The protein belongs to the TRAFAC class translation factor GTPase superfamily. Classic translation factor GTPase family. ERF3 subfamily.

The protein localises to the cytoplasm. Its function is as follows. Involved in translation termination. Stimulates the activity of ERF1. Binds guanine nucleotides. In Debaryomyces hansenii (strain ATCC 36239 / CBS 767 / BCRC 21394 / JCM 1990 / NBRC 0083 / IGC 2968) (Yeast), this protein is Eukaryotic peptide chain release factor GTP-binding subunit (SUP35).